The chain runs to 201 residues: Flavin prenyltransferase UbiX (201 aa).

FMN is bound by residues 23–25 (GAS), S49, 103–106 (SIKT), and R138. Y168 and K184 together coordinate dimethylallyl phosphate.

The protein belongs to the UbiX/PAD1 family.

It catalyses the reaction dimethylallyl phosphate + FMNH2 = prenylated FMNH2 + phosphate. In terms of biological role, flavin prenyltransferase that catalyzes the synthesis of the prenylated FMN cofactor (prenyl-FMN) for 4-hydroxy-3-polyprenylbenzoic acid decarboxylase UbiD. The prenyltransferase is metal-independent and links a dimethylallyl moiety from dimethylallyl monophosphate (DMAP) to the flavin N5 and C6 atoms of FMN. The protein is Flavin prenyltransferase UbiX of Saccharolobus solfataricus (strain ATCC 35092 / DSM 1617 / JCM 11322 / P2) (Sulfolobus solfataricus).